A 143-amino-acid polypeptide reads, in one-letter code: Peptide methionine sulfoxide reductase MsrB (143 aa).

The region spanning Asp16–Lys139 is the MsrB domain. The Zn(2+) site is built by Cys55, Cys58, Cys104, and Cys107. Catalysis depends on Cys128, which acts as the Nucleophile.

Belongs to the MsrB Met sulfoxide reductase family. Zn(2+) serves as cofactor.

It catalyses the reaction L-methionyl-[protein] + [thioredoxin]-disulfide + H2O = L-methionyl-(R)-S-oxide-[protein] + [thioredoxin]-dithiol. The sequence is that of Peptide methionine sulfoxide reductase MsrB from Burkholderia thailandensis (strain ATCC 700388 / DSM 13276 / CCUG 48851 / CIP 106301 / E264).